Consider the following 367-residue polypeptide: Methylthioribose-1-phosphate isomerase (367 aa).

Substrate contacts are provided by residues 48 to 50 (RGA), R91, and Q215. The Proton donor role is filled by D256. 266 to 267 (NK) provides a ligand contact to substrate.

This sequence belongs to the eIF-2B alpha/beta/delta subunits family. MtnA subfamily.

It catalyses the reaction 5-(methylsulfanyl)-alpha-D-ribose 1-phosphate = 5-(methylsulfanyl)-D-ribulose 1-phosphate. It functions in the pathway amino-acid biosynthesis; L-methionine biosynthesis via salvage pathway; L-methionine from S-methyl-5-thio-alpha-D-ribose 1-phosphate: step 1/6. Its function is as follows. Catalyzes the interconversion of methylthioribose-1-phosphate (MTR-1-P) into methylthioribulose-1-phosphate (MTRu-1-P). This is Methylthioribose-1-phosphate isomerase from Syntrophus aciditrophicus (strain SB).